Reading from the N-terminus, the 199-residue chain is VAMP-like protein YKT61 (199 aa).

Residues 7 to 133 (LVLKCAPEAS…LTEALNKFQD (127 aa)) enclose the Longin domain. The 61-residue stretch at 139–199 (KLLKIQRELD…KKTNSCCTIL (61 aa)) folds into the v-SNARE coiled-coil homology domain. C195 carries the S-palmitoyl cysteine lipid modification. C196 is modified (cysteine methyl ester). C196 carries S-geranylgeranyl cysteine lipidation. A propeptide spans 197–199 (TIL) (removed in mature form).

The protein belongs to the synaptobrevin family. In terms of assembly, interacts with SYP41. Core constituent of the SNARE complex required for membrane fusion at the trans-Golgi network. In terms of tissue distribution, expressed ubiquitously in roots, stems, flowers and leaves.

The protein resides in the cell membrane. May be involved in the secretory pathway. Essential for membrane fusion mediated by either SYP41 or SYP61; triggers the fusion of phospholipid vesicles containing SYP41 or SYP61 and VTI12. The protein is VAMP-like protein YKT61 of Arabidopsis thaliana (Mouse-ear cress).